We begin with the raw amino-acid sequence, 194 residues long: Fe/S biogenesis protein NfuA (194 aa).

[4Fe-4S] cluster is bound by residues C152 and C155.

It belongs to the NfuA family. In terms of assembly, homodimer. [4Fe-4S] cluster is required as a cofactor.

Its function is as follows. Involved in iron-sulfur cluster biogenesis. Binds a 4Fe-4S cluster, can transfer this cluster to apoproteins, and thereby intervenes in the maturation of Fe/S proteins. Could also act as a scaffold/chaperone for damaged Fe/S proteins. The chain is Fe/S biogenesis protein NfuA from Stutzerimonas stutzeri (strain A1501) (Pseudomonas stutzeri).